Reading from the N-terminus, the 319-residue chain is BTB/POZ domain-containing adapter for CUL3-mediated RhoA degradation protein 2 (319 aa).

Positions 31 to 99 constitute a BTB domain; sequence KYIRLNVGGC…LRDDTIALPK (69 aa).

Belongs to the BACURD family. As to quaternary structure, component of the BCR(TNFAIP1) E3 ubiquitin ligase complex, at least composed of cul3, tnfaip1/bacurd2 and rbx1.

The protein localises to the cytoplasm. The protein resides in the nucleus. It is found in the endosome. It functions in the pathway protein modification; protein ubiquitination. Functionally, substrate-specific adapter of a BCR (BTB-CUL3-RBX1) E3 ubiquitin-protein ligase complex involved in regulation of cytoskeleton structure. The BCR(TNFAIP1) E3 ubiquitin ligase complex mediates the ubiquitination of target proteins, leading to their degradation by the proteasome. In Xenopus laevis (African clawed frog), this protein is BTB/POZ domain-containing adapter for CUL3-mediated RhoA degradation protein 2 (tnfaip1).